We begin with the raw amino-acid sequence, 156 residues long: MSELTHVRADGSAHMVDVTGKNETSRTAVAEGFVKMRGDVVKQLFSAGLPKGDALPVARIAGIMGAKKTPDIIPLCHPLPLGKITVDFFELTDGVRIEASVKTRGVTGVEMEALTAVSTAALTVYDMIKAVDKMAVIDGIRVLSKTGGKSGDWSVQ.

Substrate contacts are provided by residues 75–77 and 111–112; these read LCH and ME. The active site involves Asp126.

It belongs to the MoaC family. Homohexamer; trimer of dimers.

It carries out the reaction (8S)-3',8-cyclo-7,8-dihydroguanosine 5'-triphosphate = cyclic pyranopterin phosphate + diphosphate. The protein operates within cofactor biosynthesis; molybdopterin biosynthesis. Its function is as follows. Catalyzes the conversion of (8S)-3',8-cyclo-7,8-dihydroguanosine 5'-triphosphate to cyclic pyranopterin monophosphate (cPMP). The chain is Cyclic pyranopterin monophosphate synthase from Corynebacterium glutamicum (strain ATCC 13032 / DSM 20300 / JCM 1318 / BCRC 11384 / CCUG 27702 / LMG 3730 / NBRC 12168 / NCIMB 10025 / NRRL B-2784 / 534).